The chain runs to 278 residues: Betaine--homocysteine S-methyltransferase 1 (278 aa).

Residues 11-278 form the Hcy-binding domain; it reads KGILERLNSG…FGLEPRVATR (268 aa). N6-succinyllysine occurs at positions 40, 93, and 98. A Zn(2+)-binding site is contributed by C217. 2 positions are modified to N6-succinyllysine: K232 and K241.

As to quaternary structure, homotetramer. The cofactor is Zn(2+). In terms of tissue distribution, found exclusively in liver and kidney.

It is found in the cytoplasm. The protein resides in the cytosol. The protein localises to the nucleus. It carries out the reaction L-homocysteine + glycine betaine = N,N-dimethylglycine + L-methionine. The protein operates within amine and polyamine degradation; betaine degradation; sarcosine from betaine: step 1/2. Its pathway is amino-acid biosynthesis; L-methionine biosynthesis via de novo pathway; L-methionine from L-homocysteine (BhmT route): step 1/1. Inhibited by dimethylglycine and methylthioacetate. Its function is as follows. Involved in the regulation of homocysteine metabolism. Converts betaine and homocysteine to dimethylglycine and methionine, respectively. This reaction is also required for the irreversible oxidation of choline. This is Betaine--homocysteine S-methyltransferase 1 from Sus scrofa (Pig).